The primary structure comprises 132 residues: Histone H2A (132 aa).

A compositionally biased stretch (basic residues) spans 1-13 (MSAKGKTGRKKAS). Residues 1–21 (MSAKGKTGRKKASKGTSNSAK) form a disordered region.

This sequence belongs to the histone H2A family. The nucleosome is a histone octamer containing two molecules each of H2A, H2B, H3 and H4 assembled in one H3-H4 heterotetramer and two H2A-H2B heterodimers. The octamer wraps approximately 147 bp of DNA.

The protein localises to the nucleus. It localises to the chromosome. Core component of nucleosome. Nucleosomes wrap and compact DNA into chromatin, limiting DNA accessibility to the cellular machineries which require DNA as a template. Histones thereby play a central role in transcription regulation, DNA repair, DNA replication and chromosomal stability. DNA accessibility is regulated via a complex set of post-translational modifications of histones, also called histone code, and nucleosome remodeling. The chain is Histone H2A from Plasmodium falciparum.